We begin with the raw amino-acid sequence, 433 residues long: Inositol hexakisphosphate kinase 1 (433 aa).

A disordered region spans residues Glu100–Ser160. Basic residues predominate over residues Pro113–His123. The span at Ser139–Ala149 shows a compositional bias: polar residues. Basic and acidic residues predominate over residues Lys150–Ser160. Ser151 is subject to Phosphoserine. Pro220 to Gly228 lines the substrate pocket. The disordered stretch occupies residues Glu359 to Pro383.

Belongs to the inositol phosphokinase (IPK) family. In terms of tissue distribution, highly expressed in brain and testis. Detected at much lower levels in heart, kidney, liver, lung and spleen.

It is found in the cytoplasm. The protein localises to the nucleus. It carries out the reaction 1D-myo-inositol hexakisphosphate + ATP = 5-diphospho-1D-myo-inositol 1,2,3,4,6-pentakisphosphate + ADP. The catalysed reaction is 1-diphospho-1D-myo-inositol 2,3,4,5,6-pentakisphosphate + ATP + H(+) = 1,5-bis(diphospho)-1D-myo-inositol 2,3,4,6-tetrakisphosphate + ADP. Converts inositol hexakisphosphate (InsP6) to diphosphoinositol pentakisphosphate (InsP7/PP-InsP5). Converts 1,3,4,5,6-pentakisphosphate (InsP5) to PP-InsP4. The chain is Inositol hexakisphosphate kinase 1 (Ip6k1) from Mus musculus (Mouse).